A 261-amino-acid polypeptide reads, in one-letter code: Enolase-phosphatase E1 (261 aa).

2 residues coordinate Mg(2+): D16 and E18. Substrate is bound by residues 153–154 and K187; that span reads SS. Residue D212 coordinates Mg(2+).

This sequence belongs to the HAD-like hydrolase superfamily. MasA/MtnC family. In terms of assembly, monomer. The cofactor is Mg(2+).

Its subcellular location is the cytoplasm. The protein localises to the nucleus. The catalysed reaction is 5-methylsulfanyl-2,3-dioxopentyl phosphate + H2O = 1,2-dihydroxy-5-(methylsulfanyl)pent-1-en-3-one + phosphate. It participates in amino-acid biosynthesis; L-methionine biosynthesis via salvage pathway; L-methionine from S-methyl-5-thio-alpha-D-ribose 1-phosphate: step 3/6. Its pathway is amino-acid biosynthesis; L-methionine biosynthesis via salvage pathway; L-methionine from S-methyl-5-thio-alpha-D-ribose 1-phosphate: step 4/6. Bifunctional enzyme that catalyzes the enolization of 2,3-diketo-5-methylthiopentyl-1-phosphate (DK-MTP-1-P) into the intermediate 2-hydroxy-3-keto-5-methylthiopentenyl-1-phosphate (HK-MTPenyl-1-P), which is then dephosphorylated to form the acireductone 1,2-dihydroxy-3-keto-5-methylthiopentene (DHK-MTPene). The sequence is that of Enolase-phosphatase E1 (enoph1) from Salmo salar (Atlantic salmon).